The following is a 127-amino-acid chain: MNVPGDLRYTKDHEWVKLLADGATALVGITDFAQSELGDIVFVELKPEGTVLGEQEIFGTVEAVKTVADLFAPVAGTILELNGVLDAAETVNQDPYGEGWMVKMKVADPSSLDALMDAAAYTEMIGG.

Residues 24–105 (TALVGITDFA…YGEGWMVKMK (82 aa)) enclose the Lipoyl-binding domain. An N6-lipoyllysine modification is found at Lys65.

It belongs to the GcvH family. As to quaternary structure, the glycine cleavage system is composed of four proteins: P, T, L and H. It depends on (R)-lipoate as a cofactor.

The glycine cleavage system catalyzes the degradation of glycine. The H protein shuttles the methylamine group of glycine from the P protein to the T protein. This is Glycine cleavage system H protein from Chlorobium phaeovibrioides (strain DSM 265 / 1930) (Prosthecochloris vibrioformis (strain DSM 265)).